A 143-amino-acid polypeptide reads, in one-letter code: Large ribosomal subunit protein uL11 (143 aa).

This sequence belongs to the universal ribosomal protein uL11 family. As to quaternary structure, part of the ribosomal stalk of the 50S ribosomal subunit. Interacts with L10 and the large rRNA to form the base of the stalk. L10 forms an elongated spine to which L12 dimers bind in a sequential fashion forming a multimeric L10(L12)X complex. Post-translationally, one or more lysine residues are methylated.

Forms part of the ribosomal stalk which helps the ribosome interact with GTP-bound translation factors. In Variovorax paradoxus (strain S110), this protein is Large ribosomal subunit protein uL11.